A 526-amino-acid chain; its full sequence is MTLDNYNIFGDEYLFSMPLSPLPKVLGTFDGIQSAPTLTTPTLTPTTLRSIEETFFEMTNDAPYQAGFKPPPLAPLVNNNNNNNNNGNGNGNGNGNQQQQQVFDCGASVMPGSDTEESNGSWADGQMNEDQSISDTSSGATDSTSYQNGHMMGNSGGGNGGGTGGANNFSNVLAAAGRNTNTSNSATPARRGGGRRPNRSANMTPEEEEKRRIRRERNKQAAARCRKRRVDQTNELTEEVELLEKRGENLKKEMELLNETKNQLEYFLQAHRPTCQKVRADMLSVTTCNGLIGPPALLSAGSCGSGSSHHNNNSNSNDSSSGTITGLDATLNSTGRSNSPLDLKPVPIDEDLLLHIKDEPLDGALDSSSSLDQDGPPPHKRFALPNIATLMTPTGPAGSLQTPVSGTAPHGFGSFPTTISNISSIHNGPTLNSLNKMPKERPNTLAFQRPFGGQMQLSVSGRAPTQIQGVPIQTPSTGTFNFDSLMDGGTGLTPVSGPLIPNCTSQNKHPLELPTPTTEPSKLVSL.

Disordered regions lie at residues 71–165 (PPLA…GTGG) and 178–221 (RNTN…NKQA). 2 stretches are compositionally biased toward low complexity: residues 78-87 (NNNNNNNNNG) and 133-153 (ISDTSSGATDSTSYQNGHMMG). Over residues 154–165 (NSGGGNGGGTGG) the composition is skewed to gly residues. Residues 178 to 187 (RNTNTSNSAT) are compositionally biased toward polar residues. One can recognise a bZIP domain in the interval 208–271 (EEKRRIRRER…NQLEYFLQAH (64 aa)). The segment at 210–229 (KRRIRRERNKQAAARCRKRR) is basic motif. The tract at residues 236-264 (LTEEVELLEKRGENLKKEMELLNETKNQL) is leucine-zipper. Positions 301 to 322 (GSCGSGSSHHNNNSNSNDSSSG) are enriched in low complexity. Disordered stretches follow at residues 301-345 (GSCG…DLKP) and 504-526 (TSQNKHPLELPTPTTEPSKLVSL). Over residues 330–340 (TLNSTGRSNSP) the composition is skewed to polar residues. A Phosphoserine modification is found at serine 339.

Belongs to the bZIP family. Fos subfamily. In terms of assembly, homodimer. Heterodimer with Jra. The kay-Jra heterodimer binds more stably to the AP-1 site than either of the two proteins alone.

It is found in the nucleus. Functionally, developmentally regulated transcription factor AP-1 binds and recognizes the enhancer DNA sequence: 5'-TGA[CG]TCA-3'. May play a role in the function or determination of a particular subset of cells in the developing embryo. It is able to carry out its function either independently of or in conjunction with Jra. The sequence is that of Transcription factor kayak from Drosophila persimilis (Fruit fly).